The primary structure comprises 1226 residues: Double-stranded RNA-specific adenosine deaminase (1226 aa).

Residue R26 is modified to Asymmetric dimethylarginine. In terms of domain architecture, Z-binding 1 spans 133-199 (LSIYQDQEQR…GTPPLWKIAV (67 aa)). An interaction with Z-DNA region spans residues 133 to 202 (LSIYQDQEQR…PLWKIAVSTQ (70 aa)). Disordered regions lie at residues 208–238 (SGVVRPDGHSQGAPNSDPSLEPEDRNSTSVS) and 258–286 (GVVRPDSHSQGSPNSDPGLEPEDSNSTSA). S285 carries the phosphoserine modification. The Z-binding 2 domain maps to 293–357 (FLDMAEIKEK…TTPPIWHLTD (65 aa)). Glycyl lysine isopeptide (Lys-Gly) (interchain with G-Cter in SUMO2) cross-links involve residues K384 and K408. A Glycyl lysine isopeptide (Lys-Gly) (interchain with G-Cter in SUMO); alternate cross-link involves residue K418. A Glycyl lysine isopeptide (Lys-Gly) (interchain with G-Cter in SUMO1); alternate cross-link involves residue K418. K418 is covalently cross-linked (Glycyl lysine isopeptide (Lys-Gly) (interchain with G-Cter in SUMO2); alternate). A Phosphoserine modification is found at S481. In terms of domain architecture, DRBM 1 spans 503–571 (NPISGLLEYA…AMKAMTILLE (69 aa)). The segment covering 574–597 (KAKDSGKSEESSHYSTEKESEKTA) has biased composition (basic and acidic residues). A disordered region spans residues 574–610 (KAKDSGKSEESSHYSTEKESEKTAESQTPTPSATSFF). A Glycyl lysine isopeptide (Lys-Gly) (interchain with G-Cter in SUMO2) cross-link involves residue K580. The span at 600-610 (QTPTPSATSFF) shows a compositional bias: polar residues. Phosphothreonine is present on residues T601 and T603. Residues S614, S629, and S636 each carry the phosphoserine modification. The 69-residue stretch at 614–682 (SPVTTLLECM…AEEAMKALHG (69 aa)) folds into the DRBM 2 domain. The interval 716 to 725 (IGELVRYLNT) is N-terminal extension of DRBM 3 and constituent of a bi-partite nuclear localization signal. Residues 726 to 794 (NPVGGLLEYA…ADAALRVLIG (69 aa)) form the DRBM 3 domain. A C-terminal extension of DRBM 3 and constituent of a bi-partite nuclear localization signal region spans residues 795-801 (ENEKAER). A Phosphothreonine modification is found at T808. Residues S814, S823, and S825 each carry the phosphoserine modification. A Glycyl lysine isopeptide (Lys-Gly) (interchain with G-Cter in SUMO2) cross-link involves residue K875. An A to I editase domain is found at 886–1221 (SLGTGNRCVK…ISKPQEEKNF (336 aa)). H910 provides a ligand contact to Zn(2+). The active-site Proton donor is E912. Zn(2+)-binding residues include C966 and C1036.

As to quaternary structure, homodimer. Homodimerization is essential for its catalytic activity. Isoform 5 can form heterodimers with ADARB1/ADAR2. Isoform 1 interacts with ILF2/NF45 and ILF3/NF90. Binding to ILF3/NF90 up-regulates ILF3-mediated gene expression. Isoform 1 and isoform 5 (via DRBM 3 domain) interact with TNPO1. Isoform 5 (via DRBM domains) interacts with XPO5. Isoform 1 and isoform 5 can interact with EIF2AK2/PKR and UPF1. Post-translationally, sumoylation reduces RNA-editing activity. In terms of tissue distribution, ubiquitously expressed, highest levels were found in brain and lung. Isoform 5 is expressed at higher levels in astrocytomas as compared to normal brain tissue and expression increases strikingly with the severity of the tumor, being higher in the most aggressive tumors.

It is found in the cytoplasm. The protein localises to the nucleus. It localises to the nucleolus. It carries out the reaction adenosine in double-stranded RNA + H2O + H(+) = inosine in double-stranded RNA + NH4(+). In terms of biological role, catalyzes the hydrolytic deamination of adenosine to inosine in double-stranded RNA (dsRNA) referred to as A-to-I RNA editing. This may affect gene expression and function in a number of ways that include mRNA translation by changing codons and hence the amino acid sequence of proteins since the translational machinery read the inosine as a guanosine; pre-mRNA splicing by altering splice site recognition sequences; RNA stability by changing sequences involved in nuclease recognition; genetic stability in the case of RNA virus genomes by changing sequences during viral RNA replication; and RNA structure-dependent activities such as microRNA production or targeting or protein-RNA interactions. Can edit both viral and cellular RNAs and can edit RNAs at multiple sites (hyper-editing) or at specific sites (site-specific editing). Its cellular RNA substrates include: bladder cancer-associated protein (BLCAP), neurotransmitter receptors for glutamate (GRIA2) and serotonin (HTR2C) and GABA receptor (GABRA3). Site-specific RNA editing of transcripts encoding these proteins results in amino acid substitutions which consequently alters their functional activities. Exhibits low-level editing at the GRIA2 Q/R site, but edits efficiently at the R/G site and HOTSPOT1. Its viral RNA substrates include: hepatitis C virus (HCV), vesicular stomatitis virus (VSV), measles virus (MV), hepatitis delta virus (HDV), and human immunodeficiency virus type 1 (HIV-1). Exhibits either a proviral (HDV, MV, VSV and HIV-1) or an antiviral effect (HCV) and this can be editing-dependent (HDV and HCV), editing-independent (VSV and MV) or both (HIV-1). Impairs HCV replication via RNA editing at multiple sites. Enhances the replication of MV, VSV and HIV-1 through an editing-independent mechanism via suppression of EIF2AK2/PKR activation and function. Stimulates both the release and infectivity of HIV-1 viral particles by an editing-dependent mechanism where it associates with viral RNAs and edits adenosines in the 5'UTR and the Rev and Tat coding sequence. Can enhance viral replication of HDV via A-to-I editing at a site designated as amber/W, thereby changing an UAG amber stop codon to an UIG tryptophan (W) codon that permits synthesis of the large delta antigen (L-HDAg) which has a key role in the assembly of viral particles. However, high levels of ADAR1 inhibit HDV replication. This Homo sapiens (Human) protein is Double-stranded RNA-specific adenosine deaminase (ADAR).